The following is a 173-amino-acid chain: uncharacterized protein (173 aa).

The segment at 80–107 (HSATVKRTDSSHRLKSHVVDKRPRRSLD) is disordered. Residues 85-107 (KRTDSSHRLKSHVVDKRPRRSLD) are compositionally biased toward basic and acidic residues.

This is an uncharacterized protein from Autographa californica nuclear polyhedrosis virus (AcMNPV).